The chain runs to 496 residues: Squalene epoxidase ERG1 (496 aa).

Residues valine 4–phenylalanine 24 form a helical membrane-spanning segment. Residues valine 15 to isoleucine 16, glutamate 35 to arginine 36, arginine 43, arginine 148, valine 164, aspartate 332, and methionine 345 each bind FAD. 2 helical membrane passes run isoleucine 431–valine 451 and leucine 466–phenylalanine 486.

Belongs to the squalene monooxygenase family. Requires FAD as cofactor.

It is found in the microsome membrane. It localises to the endoplasmic reticulum membrane. The enzyme catalyses squalene + reduced [NADPH--hemoprotein reductase] + O2 = (S)-2,3-epoxysqualene + oxidized [NADPH--hemoprotein reductase] + H2O + H(+). The protein operates within terpene metabolism; lanosterol biosynthesis; lanosterol from farnesyl diphosphate: step 2/3. With respect to regulation, activity is completely abolished by Triton X-100, deoxycholate or Cu(2+), and partially inhibited by thiol reagents, rotenone and antimycin A. The allylamine antimycotic agents naftifine and SF 86-327are potent inhibitors and show apparently non-competitive kinetics with respect to the substrate squalene. In terms of biological role, squalene epoxidase; part of the third module of ergosterol biosynthesis pathway that includes the late steps of the pathway. Erg1 catalyzes the epoxidation of squalene into 2,3-epoxysqualene. The third module or late pathway involves the ergosterol synthesis itself through consecutive reactions that mainly occur in the endoplasmic reticulum (ER) membrane. Firstly, the squalene synthase ERG9 catalyzes the condensation of 2 farnesyl pyrophosphate moieties to form squalene, which is the precursor of all steroids. Squalene synthase is crucial for balancing the incorporation of farnesyl diphosphate (FPP) into sterol and nonsterol isoprene synthesis. Secondly, the squalene epoxidase ERG1 catalyzes the stereospecific oxidation of squalene to (S)-2,3-epoxysqualene, which is considered to be a rate-limiting enzyme in steroid biosynthesis. Then, the lanosterol synthase ERG7 catalyzes the cyclization of (S)-2,3 oxidosqualene to lanosterol, a reaction that forms the sterol core. In the next steps, lanosterol is transformed to zymosterol through a complex process involving various demethylation, reduction and desaturation reactions. The lanosterol 14-alpha-demethylase ERG11 (also known as CYP51) catalyzes C14-demethylation of lanosterol to produce 4,4'-dimethyl cholesta-8,14,24-triene-3-beta-ol, which is critical for ergosterol biosynthesis. The C-14 reductase ERG24 reduces the C14=C15 double bond of 4,4-dimethyl-cholesta-8,14,24-trienol to produce 4,4-dimethyl-cholesta-8,24-dienol. 4,4-dimethyl-cholesta-8,24-dienol is substrate of the C-4 demethylation complex ERG25-ERG26-ERG27 in which ERG25 catalyzes the three-step monooxygenation required for the demethylation of 4,4-dimethyl and 4alpha-methylsterols, ERG26 catalyzes the oxidative decarboxylation that results in a reduction of the 3-beta-hydroxy group at the C-3 carbon to an oxo group, and ERG27 is responsible for the reduction of the keto group on the C-3. ERG28 has a role as a scaffold to help anchor ERG25, ERG26 and ERG27 to the endoplasmic reticulum and ERG29 regulates the activity of the iron-containing C4-methylsterol oxidase ERG25. Then, the sterol 24-C-methyltransferase ERG6 catalyzes the methyl transfer from S-adenosyl-methionine to the C-24 of zymosterol to form fecosterol. The C-8 sterol isomerase ERG2 catalyzes the reaction which results in unsaturation at C-7 in the B ring of sterols and thus converts fecosterol to episterol. The sterol-C5-desaturase ERG3 then catalyzes the introduction of a C-5 double bond in the B ring to produce 5-dehydroepisterol. The C-22 sterol desaturase ERG5 further converts 5-dehydroepisterol into ergosta-5,7,22,24(28)-tetraen-3beta-ol by forming the C-22(23) double bond in the sterol side chain. Finally, ergosta-5,7,22,24(28)-tetraen-3beta-ol is substrate of the C-24(28) sterol reductase ERG4 to produce ergosterol. This is Squalene epoxidase ERG1 from Candida albicans (strain SC5314 / ATCC MYA-2876) (Yeast).